We begin with the raw amino-acid sequence, 431 residues long: MIDITLLRKDLDAVLARLSARKNPQPFLDAERFRALEAERRTLQSSTEDLQARRNQLSKQIGHLKAKGGDVAPVMDEVGGIGDTLKAGAERLEQIQGELGLMLMHVPNLPQADVPVGADETANLEVRRWGSPREFDFTVRDHVDLGAPLGLDFETSAKLSGARFSFLKGPAARLHRALAQFMLDVQTQEHGYTECYTPYIVNREVLEGTGQLPKFKEDMFWVSRGGDETQPEQYLISTSEISLTNSVREQVLAADQLPIKLTAHSPCFRSEAGSAGRDTRGLIRQHQFDKVEMVQITTPEQSDAALESMVGHAEAVLQKLGLPYRVLLLSTGDMGFGSAKTYDLEVWVPAQATYREISSCSNCEAFQARRMQTRFKNAQGKNEFVHTLNGSGLAVGRTLVAVLENYQNADGSITVPEILRPYLGGLLELRA.

238–240 is an L-serine binding site; that stretch reads TSE. 269 to 271 serves as a coordination point for ATP; sequence RSE. Position 292 (Glu292) interacts with L-serine. 356-359 lines the ATP pocket; sequence EISS. An L-serine-binding site is contributed by Ser391.

The protein belongs to the class-II aminoacyl-tRNA synthetase family. Type-1 seryl-tRNA synthetase subfamily. Homodimer. The tRNA molecule binds across the dimer.

Its subcellular location is the cytoplasm. It catalyses the reaction tRNA(Ser) + L-serine + ATP = L-seryl-tRNA(Ser) + AMP + diphosphate + H(+). It carries out the reaction tRNA(Sec) + L-serine + ATP = L-seryl-tRNA(Sec) + AMP + diphosphate + H(+). It functions in the pathway aminoacyl-tRNA biosynthesis; selenocysteinyl-tRNA(Sec) biosynthesis; L-seryl-tRNA(Sec) from L-serine and tRNA(Sec): step 1/1. Functionally, catalyzes the attachment of serine to tRNA(Ser). Is also able to aminoacylate tRNA(Sec) with serine, to form the misacylated tRNA L-seryl-tRNA(Sec), which will be further converted into selenocysteinyl-tRNA(Sec). This chain is Serine--tRNA ligase, found in Leptothrix cholodnii (strain ATCC 51168 / LMG 8142 / SP-6) (Leptothrix discophora (strain SP-6)).